The sequence spans 182 residues: MLISHSDLNQQLKSAGIGFNATELHGFLSGLLCGGLKDQSWLPLLYQFSNDNHAYPTALVQPVTELYEKISQTLSDVEGFTFGLGLTEDENVFAQADSLSDWANQFLLGLGLAQPELAKEKGEIGEAVDDLQDICQLGYNEDDNEEELAEALEEIIEYVRTIAMLFYSHFNEGEIESKPVLH.

The protein belongs to the UPF0149 family.

In Haemophilus influenzae (strain PittEE), this protein is UPF0149 protein CGSHiEE_07975.